Reading from the N-terminus, the 693-residue chain is Triadin (693 aa).

Residues 1 to 47 (MTEITAEGNASTTTTVIDNKNGCIPKSPGKVLKRSVTEDIVTTFSSP) are Cytoplasmic-facing. The chain crosses the membrane as a helical span at residues 48–68 (AAWLLVIALIITWSAVAIVMF). Topologically, residues 69–693 (DLVDYKNFSA…NSPGQKQQEQ (625 aa)) are lumenal. Acidic residues predominate over residues 117-130 (EGDEDDEDADEDID). 3 disordered regions span residues 117–260 (EGDE…AVHE), 278–649 (GDLK…QTRP), and 666–693 (FQFP…QQEQ). 2 stretches are compositionally biased toward basic and acidic residues: residues 131–241 (KGEI…KETP) and 249–260 (KKDDKEMPAVHE). S301 is modified (phosphoserine). A compositionally biased stretch (basic and acidic residues) spans 305–352 (LEEKEKEEKKKMEKKDTSDTKKKEKEVKKKSEETTIDGKGKEPGKPPE). Polar residues predominate over residues 354 to 364 (KQMTAKLTTQA). 2 stretches are compositionally biased toward basic and acidic residues: residues 366–427 (ARKD…KEEI) and 438–502 (GKKE…KEAK). N-linked (GlcNAc...) asparagine glycosylation is present at N515. 2 stretches are compositionally biased toward basic and acidic residues: residues 526–547 (VKPE…DKPK) and 558–579 (DSGK…REEN). N584 carries N-linked (GlcNAc...) asparagine glycosylation. The span at 587 to 637 (KAEKPGKIPKDSKEAPASKKDKEDSKEAPTSKKDKEDSKDVPHSKKDKEVT) shows a compositional bias: basic and acidic residues. A compositionally biased stretch (polar residues) spans 672–693 (PVQQPGENPGKTNSPGQKQQEQ).

In terms of assembly, homooligomer of variable subunit number; disulfide-linked. Interacts with CASQ1 and RYR1 in skeletal muscle. Interacts with CASQ2. Phosphorylated by CaMK2. In terms of processing, N-glycosylated. As to expression, detected in heart (at protein level). Detected in heart.

It is found in the sarcoplasmic reticulum membrane. In terms of biological role, contributes to the regulation of lumenal Ca2+ release via the sarcoplasmic reticulum calcium release channels RYR1 and RYR2, a key step in triggering skeletal and heart muscle contraction. Required for normal organization of the triad junction, where T-tubules and the sarcoplasmic reticulum terminal cisternae are in close contact. Required for normal skeletal muscle strength. Plays a role in excitation-contraction coupling in the heart and in regulating the rate of heart beats. The protein is Triadin of Mus musculus (Mouse).